Consider the following 147-residue polypeptide: Phosphoribosyl-AMP cyclohydrolase 2 (147 aa).

Aspartate 99 contacts Mg(2+). Cysteine 100 is a Zn(2+) binding site. Residues aspartate 101 and aspartate 103 each coordinate Mg(2+). Residues cysteine 116 and cysteine 123 each coordinate Zn(2+).

It belongs to the PRA-CH family. Homodimer. It depends on Mg(2+) as a cofactor. Zn(2+) is required as a cofactor.

The protein localises to the cytoplasm. The catalysed reaction is 1-(5-phospho-beta-D-ribosyl)-5'-AMP + H2O = 1-(5-phospho-beta-D-ribosyl)-5-[(5-phospho-beta-D-ribosylamino)methylideneamino]imidazole-4-carboxamide. The protein operates within amino-acid biosynthesis; L-histidine biosynthesis; L-histidine from 5-phospho-alpha-D-ribose 1-diphosphate: step 3/9. Its function is as follows. Catalyzes the hydrolysis of the adenine ring of phosphoribosyl-AMP. The chain is Phosphoribosyl-AMP cyclohydrolase 2 from Pseudomonas fluorescens (strain ATCC BAA-477 / NRRL B-23932 / Pf-5).